The following is a 297-amino-acid chain: MATAILPSTSGVIGLWDGTTDGKEGFMDYANGDTNVKQPKEYEIQVHDIRKLDPQPTLLKNGYELVDIPTVVTDEQFIESGKSDEGNAYIKDVYFAECKRIIEEVSGGVDLIIPVSFRMREQKGEKESTTKKLGNIESRYAPRPVAHLDRDTPTAITVLEETVGKEKAQELLSKHKRWAQVNVWRPIGNPATMWPLCFLNHDRIPTWNYDTHVGHVWSLNDPRVSDRGQKTYDCVVKHDDRYDYHYVSDLRPEECLVFCSFDSIPKYAMPHSAFWDNNVPADAPNRRSIEVRSLVFF.

This sequence belongs to the asaB hydroxylase/desaturase family.

It functions in the pathway secondary metabolite biosynthesis. Functionally, oxidoreductase; part of the gene cluster that mediates the biosynthesis of squalestatin S1 (SQS1, also known as zaragozic acid A), a heavily oxidized fungal polyketide that offers potent cholesterol lowering activity by targeting squalene synthase (SS). SQS1 is composed of a 2,8-dioxobicyclic[3.2.1]octane-3,4,5-tricarboxyclic acid core that is connected to two lipophilic polyketide arms. These initial steps feature the priming of an unusual benzoic acid starter unit onto the highly reducing polyketide synthase pks2, followed by oxaloacetate extension and product release to generate a tricarboxylic acid containing product. The phenylalanine ammonia lyase (PAL) M7 and the acyl-CoA ligase M9 are involved in transforming phenylalanine into benzoyl-CoA. The citrate synthase-like protein R3 is involved in connecting the C-alpha-carbons of the hexaketide chain and oxaloacetate to afford the tricarboxylic acid unit. The potential hydrolytic enzymes, M8 and M10, are in close proximity to pks2 and may participate in product release. On the other side, the tetraketide arm is synthesized by a the squalestatin tetraketide synthase pks1 and enzymatically esterified to the core in the last biosynthetic step, by the acetyltransferase M4. The biosynthesis of the tetraketide must involve 3 rounds of chain extension. After the first and second rounds methyl-transfer occurs, and in all rounds of extension the ketoreductase and dehydratase are active. The enoyl reductase and C-MeT of pks1 are not active in the final round of extension. The acetyltransferase M4 appears to have a broad substrate selectivity for its acyl CoA substrate, allowing the in vitro synthesis of novel squalestatins. The biosynthesis of SQS1 requires several oxidative steps likely performed by oxidoreductases M1, R1 and R2. Finally, in support of the identification of the cluster as being responsible for SQS1 production, the cluster contains a gene encoding a putative squalene synthase (SS) R6, suggesting a likely mechanism for self-resistance. In Phoma sp. (strain ATCC 20986 / MF5453), this protein is Oxidoreductase R1.